The chain runs to 362 residues: Peptide chain release factor 1 (362 aa).

An N5-methylglutamine modification is found at Gln236.

Belongs to the prokaryotic/mitochondrial release factor family. Post-translationally, methylated by PrmC. Methylation increases the termination efficiency of RF1.

The protein localises to the cytoplasm. Its function is as follows. Peptide chain release factor 1 directs the termination of translation in response to the peptide chain termination codons UAG and UAA. The sequence is that of Peptide chain release factor 1 from Lactobacillus gasseri (strain ATCC 33323 / DSM 20243 / BCRC 14619 / CIP 102991 / JCM 1131 / KCTC 3163 / NCIMB 11718 / NCTC 13722 / AM63).